A 267-amino-acid chain; its full sequence is tRNA pseudouridine synthase A (267 aa).

The Nucleophile role is filled by aspartate 51. Residue tyrosine 109 participates in substrate binding.

Belongs to the tRNA pseudouridine synthase TruA family. Homodimer.

It carries out the reaction uridine(38/39/40) in tRNA = pseudouridine(38/39/40) in tRNA. Its function is as follows. Formation of pseudouridine at positions 38, 39 and 40 in the anticodon stem and loop of transfer RNAs. The polypeptide is tRNA pseudouridine synthase A (Staphylococcus saprophyticus subsp. saprophyticus (strain ATCC 15305 / DSM 20229 / NCIMB 8711 / NCTC 7292 / S-41)).